We begin with the raw amino-acid sequence, 341 residues long: Inositol 2-dehydrogenase (341 aa).

Belongs to the Gfo/Idh/MocA family. As to quaternary structure, homotetramer.

The catalysed reaction is myo-inositol + NAD(+) = scyllo-inosose + NADH + H(+). In terms of biological role, involved in the oxidation of myo-inositol (MI) to 2-keto-myo-inositol (2KMI or 2-inosose). The polypeptide is Inositol 2-dehydrogenase (Acidothermus cellulolyticus (strain ATCC 43068 / DSM 8971 / 11B)).